The chain runs to 262 residues: 3-deoxy-manno-octulosonate cytidylyltransferase (262 aa).

The protein belongs to the KdsB family.

Its subcellular location is the cytoplasm. It catalyses the reaction 3-deoxy-alpha-D-manno-oct-2-ulosonate + CTP = CMP-3-deoxy-beta-D-manno-octulosonate + diphosphate. It participates in nucleotide-sugar biosynthesis; CMP-3-deoxy-D-manno-octulosonate biosynthesis; CMP-3-deoxy-D-manno-octulosonate from 3-deoxy-D-manno-octulosonate and CTP: step 1/1. Its pathway is bacterial outer membrane biogenesis; lipopolysaccharide biosynthesis. Functionally, activates KDO (a required 8-carbon sugar) for incorporation into bacterial lipopolysaccharide in Gram-negative bacteria. In Acidovorax sp. (strain JS42), this protein is 3-deoxy-manno-octulosonate cytidylyltransferase.